We begin with the raw amino-acid sequence, 477 residues long: MTSLTQVKQYGLYVNGEWETTAEKMEVLNKYTQQPAAEISVATKDDVNKAVASAKDALKNTFSPYERYEVLMKAADLLLSRQEEFAEILATEVGKSIRESRGEVERAATTLQISAEEAKRIHGEGVPVESAPGSENRMAFTVKVPVGVVAAITPFNVPINLVCHKLGPALAAGNSVVLKPAEVTPICALKLAELMEEAGLPKGRLQVLTGDGAEIGEWLLENQDVNMFTFTGSPRVGELIRSKAGLRKVSLELGNNSATIVHKDADLEKAASLISQKSFNNAGQVCISVQRIYVHTNIYTAFVNKLKEKTEKLVVGNPMDEQTDIGPMIRLKEAERVEEWVKEAVEEGAKIELGGKRDGAFYLPTILTNVNDDMKVCRQEVFGPAVAIAQYDEIDEVISKVNDSDYGLQAGLFTNDLQFAMKAAREIEVGGLIVNDASAYRVDHMPYGGVKKSGNGKEGPKYAIEEMTEERIIVLNL.

232 to 233 (GS) contributes to the NAD(+) binding site. The active-site Proton acceptor is Glu-252. Residue Leu-253 participates in NAD(+) binding. Cys-286 functions as the Nucleophile in the catalytic mechanism. NAD(+) is bound at residue Glu-380.

This sequence belongs to the aldehyde dehydrogenase family.

The enzyme catalyses (2S)-3-sulfolactaldehyde + NAD(+) + H2O = (2S)-3-sulfolactate + NADH + 2 H(+). Its function is as follows. Part of the sulfo-TAL (or sulfo-SFT) pathway, a D-sulfoquinovose degradation pathway that produces sulfolactate (SL). Catalyzes the oxidation of 3-sulfolactaldehyde (SLA) to sulfolactate (SL). The chain is 3-sulfolactaldehyde dehydrogenase from Priestia aryabhattai (Bacillus aryabhattai).